A 446-amino-acid chain; its full sequence is Protein odr-4 homolog (446 aa).

Residues 76–96 traverse the membrane as a helical segment; the sequence is ASQVGRMLPGGLMVLGVFLMT. Residues 394-415 are compositionally biased toward basic and acidic residues; that stretch reads HPEKRESEPASQHLESKPENKA. A disordered region spans residues 394 to 417; sequence HPEKRESEPASQHLESKPENKARS. A helical membrane pass occupies residues 426–446; sequence GLVISTIVASIAIIISFYYIM.

Belongs to the ODR-4 family.

The protein resides in the membrane. Its function is as follows. May play a role in the trafficking of a subset of G-protein coupled receptors. The sequence is that of Protein odr-4 homolog (odr4) from Xenopus laevis (African clawed frog).